The following is a 547-amino-acid chain: Solute carrier family 22 member 7 (547 aa).

The next 12 membrane-spanning stretches (helical) occupy residues 21–41 (VALL…PIFL), 145–165 (ATST…GYLS), 173–193 (LLLV…ASVS), 203–223 (LTGT…LEWL), 233–253 (VLSS…GYLI), 258–278 (WLLL…WWVP), 345–365 (ISLC…GLSL), 374–396 (VYQT…YLSV), 403–423 (LTLA…LLVS), 431–451 (TALA…AYLF), 465–485 (MGLT…AALL), and 492–512 (LPKL…LLLP). Positions 521 to 547 (ETIQDVERKSAPSSLQEEEMPMKQVQD) are disordered.

The protein belongs to the major facilitator (TC 2.A.1) superfamily. Organic cation transporter (TC 2.A.1.19) family.

It localises to the basolateral cell membrane. The protein localises to the apical cell membrane. Its subcellular location is the cell membrane. The enzyme catalyses orotate(out) + L-glutamate(in) = orotate(in) + L-glutamate(out). It carries out the reaction 3',5'-cyclic GMP(in) = 3',5'-cyclic GMP(out). It catalyses the reaction GMP(in) = GMP(out). The catalysed reaction is 2'-deoxyguanosine(in) = 2'-deoxyguanosine(out). The enzyme catalyses GDP(in) = GDP(out). It carries out the reaction guanosine(in) = guanosine(out). It catalyses the reaction GTP(in) = GTP(out). The catalysed reaction is 3',5'-cyclic AMP(in) = 3',5'-cyclic AMP(out). The enzyme catalyses creatinine(in) = creatinine(out). It carries out the reaction prostaglandin E2(out) = prostaglandin E2(in). It catalyses the reaction 2-oxoglutarate(in) = 2-oxoglutarate(out). The catalysed reaction is glutarate(in) = glutarate(out). The enzyme catalyses urate(out) = urate(in). It carries out the reaction estrone 3-sulfate(out) = estrone 3-sulfate(in). In terms of biological role, functions as a Na(+)-independent bidirectional multispecific transporter. Contributes to the renal and hepatic elimination of endogenous organic compounds from the systemic circulation into the urine and bile, respectively. Capable of transporting a wide range of purine and pyrimidine nucleobases, nucleosides and nucleotides, with cGMP, 2'deoxyguanosine and GMP being the preferred substrates. Functions as a pH- and chloride-independent cGMP bidirectional facilitative transporter that can regulate both intracellular and extracellular levels of cGMP and may be involved in cGMP signaling pathways. Mediates orotate/glutamate bidirectional exchange and most likely display a physiological role in hepatic release of glutamate into the blood. Involved in renal secretion and possible reabsorption of creatinine. Able to uptake prostaglandin E2 (PGE2) and may contribute to PGE2 renal excretion. Also transports alpha-ketoglutarate and urate. Apart from the orotate/glutamate exchange, the counterions for the uptake of other SLC22A7/OAT2 substrates remain to be identified. The sequence is that of Solute carrier family 22 member 7 (SLC22A7) from Sus scrofa (Pig).